We begin with the raw amino-acid sequence, 453 residues long: Gamma-aminobutyric acid receptor subunit alpha-6 (453 aa).

The signal sequence occupies residues 1 to 19 (MVLLLPWLFIILWLENAQA). At 20-243 (QLEDEGNFYS…FHLQRKMGYF (224 aa)) the chain is on the extracellular side. Asn31 carries an N-linked (GlcNAc...) asparagine glycan. Residue Arg84 participates in 4-aminobutanoate binding. N-linked (GlcNAc...) asparagine glycans are attached at residues Asn128 and Asn141. Position 147 (Thr147) interacts with 4-aminobutanoate. A disulfide bond links Cys156 and Cys170. Residues 244-264 (MIQIYTPCIMTVILSQVSFWI) form a helical membrane-spanning segment. The Cytoplasmic segment spans residues 265–270 (NKESVP). The helical transmembrane segment at 271 to 290 (ARTVFGITTVLTMTTLSISA) threads the bilayer. The Extracellular segment spans residues 291–304 (RHSLPKVSYATAMD). A helical transmembrane segment spans residues 305 to 325 (WFIAVCFAFVFSALIEFAAVN). At 326–422 (YFTNLQSQKA…GTSKIDQYSR (97 aa)) the chain is on the cytoplasmic side. Residue Ser375 is modified to Phosphoserine. A helical membrane pass occupies residues 423-443 (ILFPVAFAGFNLVYWIVYLSK). Residues 444 to 453 (DTMEVSSTVE) lie on the Extracellular side of the membrane.

This sequence belongs to the ligand-gated ion channel (TC 1.A.9) family. Gamma-aminobutyric acid receptor (TC 1.A.9.5) subfamily. GABRA6 sub-subfamily. As to quaternary structure, heteropentamer, formed by a combination of alpha (GABRA1-6), beta (GABRB1-3), gamma (GABRG1-3), delta (GABRD), epsilon (GABRE), rho (GABRR1-3), pi (GABRP) and theta (GABRQ) chains, each subunit exhibiting distinct physiological and pharmacological properties. Binds UBQLN1. As to expression, expressed in brain, in cerebellar granule cells.

The protein resides in the postsynaptic cell membrane. It localises to the cell membrane. The catalysed reaction is chloride(in) = chloride(out). In terms of biological role, alpha subunit of the heteropentameric ligand-gated chloride channel gated by gamma-aminobutyric acid (GABA), a major inhibitory neurotransmitter in the brain. GABA-gated chloride channels, also named GABA(A) receptors (GABAAR), consist of five subunits arranged around a central pore and contain GABA active binding site(s) located at the alpha and beta subunit interface(s). When activated by GABA, GABAARs selectively allow the flow of chloride anions across the cell membrane down their electrochemical gradient. Alpha-6/GABRA6 subunits are found at both synaptic and extrasynaptic sites. Chloride influx into the postsynaptic neuron following GABAAR opening decreases the neuron ability to generate a new action potential, thereby reducing nerve transmission. Extrasynaptic alpha-6-containing receptors contribute to the tonic GABAergic inhibition. Alpha-6 subunits are also present on glutamatergic synapses. This Mus musculus (Mouse) protein is Gamma-aminobutyric acid receptor subunit alpha-6.